The following is a 432-amino-acid chain: MSNSKLVKINGPLVGEIEVPGDKSMTHRAIMLGSLATGKSTIYKPLLGEDCLRTVEIFKLLGVQIEVNEDKIEIDSPGYKYFKTPHQVLYTGNSGTTTRLVAGLLCGLGIETVLSGDESIGKRPMDRIMKPLRYMNANITGINDNYTPLIIKPASISGITYEMEVASAQVKSAILFASLFANEPTKIKEFDTTRNHTETMFEHFNIPVAVNNDIIEMPSLGIEHIKPADFHVPGDISSAAYFIVAGLITPGSDITIHNVGINPTRSGIIDIVTQMEGNITLFNQTDNPEPTASIRVQYSPNMKPIHIDGDLVPRAIDEIPIVALLCTQANGTSIVKEAEELKVKETNRIDTTANMLNLLGFTLQPTNDGLIIHPSAFEQTATVNSFTDHRIGMMLAIASLLSNEALPIEQFDAVNVSFPGFLPKLKQLEKEG.

3-phosphoshikimate is bound by residues Lys23, Ser24, and Arg28. Lys23 is a phosphoenolpyruvate binding site. Positions 95 and 123 each coordinate phosphoenolpyruvate. 3-phosphoshikimate-binding residues include Ser167, Gln169, Asp317, and Lys344. Residue Gln169 participates in phosphoenolpyruvate binding. Asp317 (proton acceptor) is an active-site residue. Residues Arg348 and Arg390 each contribute to the phosphoenolpyruvate site.

This sequence belongs to the EPSP synthase family. As to quaternary structure, monomer.

The protein localises to the cytoplasm. The catalysed reaction is 3-phosphoshikimate + phosphoenolpyruvate = 5-O-(1-carboxyvinyl)-3-phosphoshikimate + phosphate. It participates in metabolic intermediate biosynthesis; chorismate biosynthesis; chorismate from D-erythrose 4-phosphate and phosphoenolpyruvate: step 6/7. Catalyzes the transfer of the enolpyruvyl moiety of phosphoenolpyruvate (PEP) to the 5-hydroxyl of shikimate-3-phosphate (S3P) to produce enolpyruvyl shikimate-3-phosphate and inorganic phosphate. This is 3-phosphoshikimate 1-carboxyvinyltransferase from Staphylococcus saprophyticus subsp. saprophyticus (strain ATCC 15305 / DSM 20229 / NCIMB 8711 / NCTC 7292 / S-41).